Here is a 327-residue protein sequence, read N- to C-terminus: Glycerol-3-phosphate dehydrogenase [NAD(P)+] (327 aa).

NADPH is bound by residues Phe-13, Arg-34, and Lys-107. 2 residues coordinate sn-glycerol 3-phosphate: Lys-107 and Gly-135. Ala-139 lines the NADPH pocket. 5 residues coordinate sn-glycerol 3-phosphate: Lys-190, Asp-243, Ser-253, Arg-254, and Asn-255. Lys-190 serves as the catalytic Proton acceptor. Arg-254 contributes to the NADPH binding site. NADPH-binding residues include Val-276 and Glu-277.

Belongs to the NAD-dependent glycerol-3-phosphate dehydrogenase family.

It localises to the cytoplasm. It catalyses the reaction sn-glycerol 3-phosphate + NAD(+) = dihydroxyacetone phosphate + NADH + H(+). The catalysed reaction is sn-glycerol 3-phosphate + NADP(+) = dihydroxyacetone phosphate + NADPH + H(+). Its pathway is membrane lipid metabolism; glycerophospholipid metabolism. Its function is as follows. Catalyzes the reduction of the glycolytic intermediate dihydroxyacetone phosphate (DHAP) to sn-glycerol 3-phosphate (G3P), the key precursor for phospholipid synthesis. The sequence is that of Glycerol-3-phosphate dehydrogenase [NAD(P)+] from Rhizobium etli (strain CIAT 652).